A 100-amino-acid chain; its full sequence is Small ribosomal subunit protein uS14c (100 aa).

This sequence belongs to the universal ribosomal protein uS14 family. As to quaternary structure, part of the 30S ribosomal subunit.

Its subcellular location is the plastid. It is found in the chloroplast. Functionally, binds 16S rRNA, required for the assembly of 30S particles. This Populus alba (White poplar) protein is Small ribosomal subunit protein uS14c.